The sequence spans 344 residues: Meiotic recombination protein DMC1 homolog B (344 aa).

133-140 (GEFRSGKT) serves as a coordination point for ATP. Arginine 235 is a dsDNA binding site. SsDNA contacts are provided by arginine 235, phenylalanine 238, arginine 241, arginine 247, and arginine 315. DsDNA is bound by residues arginine 241 and arginine 247.

Belongs to the RecA family. DMC1 subfamily. As to expression, highly expressed in spikelets. Expressed in meiotic young panicles.

It is found in the nucleus. Functionally, recombinase that may participate in meiotic recombination, specifically in homologous strand assimilation, which is required for the resolution of meiotic double-strand breaks. Exhibits DNA-dependent ATPase activity when bound to single-stranded DNA (ssDNA). Mediates renaturation of homologous complementary strands as well as assimilation of single strands into homologous supercoiled duplexes leading to D-loop formation. Binds circular single-stranded DNA (ssDNA) and circular double-stranded DNA (dsDNA) in vitro. Catalyzes DNA homologous renaturation and DNA strand exchange. The rates of these activities are dependent on the state of ATP hydrolysis. Forms helical filaments along ssDNA and dsDNA, and promotes strand exchange between ssDNA and dsDNA with long DNA substrates of several thousand base pairs. The presence of the replication protein A is not required for this activity. Seems to be required for homologous pairing and subsequent chromosome segregation during male meiosis. May be not directly required for homologous pairing during male meiosis. Required for synaptonemal complex assembly and crossover formation. Functions redundantly with DMC1A. The sequence is that of Meiotic recombination protein DMC1 homolog B from Oryza sativa subsp. japonica (Rice).